The chain runs to 390 residues: Centrosomal protein of 44 kDa (390 aa).

The segment at 11–195 (RNLEQVLRLL…ISEDTLSPIT (185 aa)) is binds with microtubules and centrioles. Residues 233–267 (EITALQTMLAECQEKLKELTLIEKRLDCLEQKMKG) are a coiled coil. Residues 323-347 (KNKVGRPASIPLSSRYSTASSDSTP) are disordered. A phosphoserine mark is found at Ser331 and Ser345. Residues 335-345 (SSRYSTASSDS) are compositionally biased toward low complexity. A Phosphothreonine modification is found at Thr346. The stretch at 361-385 (SEETTIQKMERMKKMFEETAELLKC) forms a coiled coil.

As to quaternary structure, interacts with CROCC. Interacts with POC1B; the interaction is direct and recruits POC1B to centriolar microtubules. Binds to centriolar microtubules.

The protein resides in the cytoplasm. It is found in the cytoskeleton. It localises to the microtubule organizing center. Its subcellular location is the centrosome. The protein localises to the centriole. The protein resides in the spindle pole. It is found in the midbody. Its function is as follows. Centriole-enriched microtubule-binding protein involved in centriole biogenesis. In collaboration with CEP295 and POC1B, is required for the centriole-to-centrosome conversion by ensuring the formation of bona fide centriole wall. Functions as a linker component that maintains centrosome cohesion. Associates with CROCC and regulates its stability and localization to the centrosome. This Macaca fascicularis (Crab-eating macaque) protein is Centrosomal protein of 44 kDa (CEP44).